The primary structure comprises 217 residues: Translation initiation factor IF-3 (217 aa).

The tract at residues 185 to 217 (YNLPETETTRIREENREKQKEKENTSKEGNKDA) is disordered. Basic and acidic residues predominate over residues 191-217 (ETTRIREENREKQKEKENTSKEGNKDA).

The protein belongs to the IF-3 family. As to quaternary structure, monomer.

Its subcellular location is the cytoplasm. Functionally, IF-3 binds to the 30S ribosomal subunit and shifts the equilibrium between 70S ribosomes and their 50S and 30S subunits in favor of the free subunits, thus enhancing the availability of 30S subunits on which protein synthesis initiation begins. The protein is Translation initiation factor IF-3 of Methylacidiphilum infernorum (isolate V4) (Methylokorus infernorum (strain V4)).